A 485-amino-acid chain; its full sequence is Cobyric acid synthase (485 aa).

One can recognise a GATase cobBQ-type domain in the interval 252–439 (KVRIAVPILP…VHGLFGDDRQ (188 aa)). The Nucleophile role is filled by cysteine 334. Histidine 431 is an active-site residue.

The protein belongs to the CobB/CobQ family. CobQ subfamily.

The protein operates within cofactor biosynthesis; adenosylcobalamin biosynthesis. Functionally, catalyzes amidations at positions B, D, E, and G on adenosylcobyrinic A,C-diamide. NH(2) groups are provided by glutamine, and one molecule of ATP is hydrogenolyzed for each amidation. The protein is Cobyric acid synthase of Azorhizobium caulinodans (strain ATCC 43989 / DSM 5975 / JCM 20966 / LMG 6465 / NBRC 14845 / NCIMB 13405 / ORS 571).